Consider the following 360-residue polypeptide: UDP-N-acetylglucosamine--N-acetylmuramyl-(pentapeptide) pyrophosphoryl-undecaprenol N-acetylglucosamine transferase (360 aa).

Residues 12 to 14, serine 198, and glutamine 289 each bind UDP-N-acetyl-alpha-D-glucosamine; that span reads TAG.

It belongs to the glycosyltransferase 28 family. MurG subfamily.

It is found in the cell membrane. It carries out the reaction Mur2Ac(oyl-L-Ala-gamma-D-Glu-L-Lys-D-Ala-D-Ala)-di-trans,octa-cis-undecaprenyl diphosphate + UDP-N-acetyl-alpha-D-glucosamine = beta-D-GlcNAc-(1-&gt;4)-Mur2Ac(oyl-L-Ala-gamma-D-Glu-L-Lys-D-Ala-D-Ala)-di-trans,octa-cis-undecaprenyl diphosphate + UDP + H(+). It participates in cell wall biogenesis; peptidoglycan biosynthesis. Cell wall formation. Catalyzes the transfer of a GlcNAc subunit on undecaprenyl-pyrophosphoryl-MurNAc-pentapeptide (lipid intermediate I) to form undecaprenyl-pyrophosphoryl-MurNAc-(pentapeptide)GlcNAc (lipid intermediate II). In Streptococcus equi subsp. zooepidemicus (strain H70), this protein is UDP-N-acetylglucosamine--N-acetylmuramyl-(pentapeptide) pyrophosphoryl-undecaprenol N-acetylglucosamine transferase.